A 120-amino-acid chain; its full sequence is Ribonuclease P protein component (120 aa).

The protein belongs to the RnpA family. As to quaternary structure, consists of a catalytic RNA component (M1 or rnpB) and a protein subunit.

It carries out the reaction Endonucleolytic cleavage of RNA, removing 5'-extranucleotides from tRNA precursor.. Its function is as follows. RNaseP catalyzes the removal of the 5'-leader sequence from pre-tRNA to produce the mature 5'-terminus. It can also cleave other RNA substrates such as 4.5S RNA. The protein component plays an auxiliary but essential role in vivo by binding to the 5'-leader sequence and broadening the substrate specificity of the ribozyme. This Mycobacterium marinum (strain ATCC BAA-535 / M) protein is Ribonuclease P protein component.